A 129-amino-acid polypeptide reads, in one-letter code: Transcription antitermination protein NusB (129 aa).

This sequence belongs to the NusB family.

Functionally, involved in transcription antitermination. Required for transcription of ribosomal RNA (rRNA) genes. Binds specifically to the boxA antiterminator sequence of the ribosomal RNA (rrn) operons. This is Transcription antitermination protein NusB from Staphylococcus aureus (strain N315).